A 232-amino-acid chain; its full sequence is Ribose-5-phosphate isomerase A (232 aa).

Substrate-binding positions include 28-31, 83-86, and 96-99; these read TGST, DGAD, and KGGG. Catalysis depends on E105, which acts as the Proton acceptor. Residue K123 coordinates substrate.

This sequence belongs to the ribose 5-phosphate isomerase family. In terms of assembly, homodimer.

The enzyme catalyses aldehydo-D-ribose 5-phosphate = D-ribulose 5-phosphate. It functions in the pathway carbohydrate degradation; pentose phosphate pathway; D-ribose 5-phosphate from D-ribulose 5-phosphate (non-oxidative stage): step 1/1. Catalyzes the reversible conversion of ribose-5-phosphate to ribulose 5-phosphate. The sequence is that of Ribose-5-phosphate isomerase A from Rhizobium leguminosarum bv. trifolii (strain WSM2304).